Here is a 251-residue protein sequence, read N- to C-terminus: Ditrans,polycis-undecaprenyl-diphosphate synthase ((2E,6E)-farnesyl-diphosphate specific) (251 aa).

Residue Asp-29 is part of the active site. Asp-29 contributes to the Mg(2+) binding site. Substrate-binding positions include 30 to 33 (GNGK), Trp-34, Arg-42, His-46, and 74 to 76 (SSD). Asn-77 serves as the catalytic Proton acceptor. Substrate is bound by residues Trp-78, Arg-80, Arg-197, and 203-205 (RLS). Glu-216 lines the Mg(2+) pocket.

The protein belongs to the UPP synthase family. In terms of assembly, homodimer. It depends on Mg(2+) as a cofactor.

It catalyses the reaction 8 isopentenyl diphosphate + (2E,6E)-farnesyl diphosphate = di-trans,octa-cis-undecaprenyl diphosphate + 8 diphosphate. Catalyzes the sequential condensation of isopentenyl diphosphate (IPP) with (2E,6E)-farnesyl diphosphate (E,E-FPP) to yield (2Z,6Z,10Z,14Z,18Z,22Z,26Z,30Z,34E,38E)-undecaprenyl diphosphate (di-trans,octa-cis-UPP). UPP is the precursor of glycosyl carrier lipid in the biosynthesis of bacterial cell wall polysaccharide components such as peptidoglycan and lipopolysaccharide. This chain is Ditrans,polycis-undecaprenyl-diphosphate synthase ((2E,6E)-farnesyl-diphosphate specific), found in Buchnera aphidicola subsp. Baizongia pistaciae (strain Bp).